Consider the following 94-residue polypeptide: Co-chaperonin GroES (94 aa).

The protein belongs to the GroES chaperonin family. In terms of assembly, heptamer of 7 subunits arranged in a ring. Interacts with the chaperonin GroEL.

It localises to the cytoplasm. Together with the chaperonin GroEL, plays an essential role in assisting protein folding. The GroEL-GroES system forms a nano-cage that allows encapsulation of the non-native substrate proteins and provides a physical environment optimized to promote and accelerate protein folding. GroES binds to the apical surface of the GroEL ring, thereby capping the opening of the GroEL channel. This chain is Co-chaperonin GroES, found in Lactiplantibacillus plantarum (strain ATCC BAA-793 / NCIMB 8826 / WCFS1) (Lactobacillus plantarum).